The sequence spans 810 residues: Phenylalanine--tRNA ligase beta subunit (810 aa).

Positions 39–150 (RSWAAGVVLG…LDLPSGSPVG (112 aa)) constitute a tRNA-binding domain. The 89-residue stretch at 407–495 (RGEAIINLRL…RLYGYDHFCE (89 aa)) folds into the B5 domain. The Mg(2+) site is built by Asp473, Asp479, Glu482, and Glu483. The 94-residue stretch at 716-809 (SPYPAVARDL…LTKQFAVSLR (94 aa)) folds into the FDX-ACB domain.

This sequence belongs to the phenylalanyl-tRNA synthetase beta subunit family. Type 1 subfamily. In terms of assembly, tetramer of two alpha and two beta subunits. Requires Mg(2+) as cofactor.

Its subcellular location is the cytoplasm. It carries out the reaction tRNA(Phe) + L-phenylalanine + ATP = L-phenylalanyl-tRNA(Phe) + AMP + diphosphate + H(+). The protein is Phenylalanine--tRNA ligase beta subunit (pheT) of Synechocystis sp. (strain ATCC 27184 / PCC 6803 / Kazusa).